Here is a 108-residue protein sequence, read N- to C-terminus: Nucleoid-associated protein BAV0915 (108 aa).

The protein belongs to the YbaB/EbfC family. Homodimer.

It localises to the cytoplasm. The protein localises to the nucleoid. Binds to DNA and alters its conformation. May be involved in regulation of gene expression, nucleoid organization and DNA protection. The sequence is that of Nucleoid-associated protein BAV0915 from Bordetella avium (strain 197N).